A 943-amino-acid polypeptide reads, in one-letter code: Protein translocase subunit SecA (943 aa).

Residues Q90, 108-112 (GEGKT), and D509 contribute to the ATP site. The segment at 537-556 (NEHKPPIPKQRSSKSKGGFS) is disordered.

The protein belongs to the SecA family. In terms of assembly, monomer and homodimer. Part of the essential Sec protein translocation apparatus which comprises SecA, SecYEG and auxiliary proteins SecDF. Other proteins may also be involved.

The protein localises to the cell inner membrane. Its subcellular location is the cellular thylakoid membrane. It is found in the cytoplasm. The enzyme catalyses ATP + H2O + cellular proteinSide 1 = ADP + phosphate + cellular proteinSide 2.. Part of the Sec protein translocase complex. Interacts with the SecYEG preprotein conducting channel. Has a central role in coupling the hydrolysis of ATP to the transfer of proteins into and across the cell membrane, serving as an ATP-driven molecular motor driving the stepwise translocation of polypeptide chains across the membrane. Functionally, probably participates in protein translocation into and across both the cytoplasmic and thylakoid membranes in cyanobacterial cells. This is Protein translocase subunit SecA from Prochlorococcus marinus (strain MIT 9301).